We begin with the raw amino-acid sequence, 378 residues long: Alcohol dehydrogenase 1 (378 aa).

Position 48 (C48) interacts with Zn(2+). Residue 49–53 participates in NAD(+) binding; it reads HTDVL. Zn(2+)-binding residues include H69, C99, C102, C105, C113, and C177. NAD(+)-binding positions include 202–207, D226, K231, 274–276, 297–299, and 321–323; these read GIGTVG, TGV, IGA, and TTF.

This sequence belongs to the zinc-containing alcohol dehydrogenase family. Class-IV subfamily. Homodimer. Zn(2+) serves as cofactor. As to expression, expressed in flowers and disk florets.

It participates in isoprenoid biosynthesis. The polypeptide is Alcohol dehydrogenase 1 (Tanacetum cinerariifolium (Dalmatian daisy)).